Reading from the N-terminus, the 117-residue chain is UPF0342 protein LBUL_1430 (117 aa).

This sequence belongs to the UPF0342 family.

The protein is UPF0342 protein LBUL_1430 of Lactobacillus delbrueckii subsp. bulgaricus (strain ATCC BAA-365 / Lb-18).